A 235-amino-acid chain; its full sequence is RNA pyrophosphohydrolase (235 aa).

Residues 6 to 149 form the Nudix hydrolase domain; that stretch reads GFRPNVGIIL…KRGVYEMALT (144 aa). The short motif at 38-59 is the Nudix box element; it reads GGIDRGENPEQAMFRELHEEVG. Residues 184 to 235 form a disordered region; that stretch reads ANQSGEPGSFPAAGGIPSYATRPGAPFELPPGATFEPDPQTSFGVNAPTKKT.

The protein belongs to the Nudix hydrolase family. RppH subfamily. Requires a divalent metal cation as cofactor.

Functionally, accelerates the degradation of transcripts by removing pyrophosphate from the 5'-end of triphosphorylated RNA, leading to a more labile monophosphorylated state that can stimulate subsequent ribonuclease cleavage. The chain is RNA pyrophosphohydrolase from Polaromonas naphthalenivorans (strain CJ2).